Here is a 595-residue protein sequence, read N- to C-terminus: MAETQRPRSAIIVGAGAGGIAVAARLAKAGVDVTVLEKNDFTGGRCSLIHTKAGYRFDQGPSLLLLPGLFRETFEDLGTTLEQEDVELLQCFPNYNIWFSDGKRFSPTTDNATMKVEIEKWEGPDGFRRYLSWLAEGHQHYETSLRHVLHRNFKSILELADPRLVVTLLMALHPFESIWHRAGRYFKTDRMQRVFTFATMYMGMSPFDAPATYSLLQYSELAEGIWYPRGGFHKVLDALVKIGERMGVKYRLNTGVSQVLTDGGKNGKKPKATGVQLENGEVLNADLVVVNADLVYTYNNLLPKEIGGIKKYANKLNNRKASCSSISFYWSLSGMAKELETHNIFLAEEYKESFDAIFERQALPDDPSFYIHVPSRVDPSAAPPDRDAVIALVPVGHLLQNGQPELDWPTLVSKARAGVLATIQARTGLSLSPLITEEIVNTPYTWETKFNLSKGAILGLAHDFFNVLAFRPRTKAQGMDNAYFVGASTHPGTGVPIVLAGAKITAEQILEETFPKNTKVPWTTNEERNSERMRKEMDEKITEEGIIMRSNSSKPGRRGSDAFEGAMEVVNLLSQRAFPLLVALMGVLYFLLFVR.

Residues 1-23 form the signal peptide; the sequence is MAETQRPRSAIIVGAGAGGIAVA. Residues 574-594 traverse the membrane as a helical segment; that stretch reads SQRAFPLLVALMGVLYFLLFV.

The protein belongs to the carotenoid/retinoid oxidoreductase family. The cofactor is NAD(+).

The protein localises to the membrane. The enzyme catalyses 15-cis-phytoene + A = all-trans-phytofluene + AH2. It carries out the reaction all-trans-phytofluene + A = all-trans-zeta-carotene + AH2. It catalyses the reaction all-trans-zeta-carotene + A = all-trans-neurosporene + AH2. The catalysed reaction is all-trans-neurosporene + A = all-trans-lycopene + AH2. The enzyme catalyses all-trans-lycopene + A = all-trans-3,4-didehydrolycopene + AH2. It participates in carotenoid biosynthesis; lycopene biosynthesis. Functionally, phytoene desaturase involved in the carotenoid biosynthesis pathway. Converts phytoene into 3,4-didehydrolycopene via the intermediates phytofluene, zeta-carotene, neurosporene and lycopene, by introducing up to five double bonds into phytoene. Is also able to desaturate 1-hydroxyneurosporene into 1-hydroxylycopene and 1-hydroxylycopene into 1-hydroxy-3,4-didehydrolycopene. Gamma-carotene and 1,19-dihydroxylycopene are not accepted as substrates. Neurosporaxanthin is synthesized from geranyl-geranyl pyrophosphate (GGPP) through several enzymatic activities. Phytoene synthase activity performed by the bifunctional enzyme al-2 first produces phytoene from geranyl-geranyl pyrophosphate (GGPP). The phytoene dehydrogenase al-1 then introduces 5 desaturations to lead to 3,4-didehydrolycopene via the intermediates phytofluene, zeta-carotene, neurosporene and lycopene. Al-2 cyclase activity then converts 3,4-didehydrolycopene into torulene. Al-2 can also convet lycopene into gamma-carotene which in turn is converted to beta-carotene by an additional al-2 cyclization reaction. Torulene is the substrate of the dioxidase cao-2 that breaks the molecule, removing five carbon atoms to yield beta-apo-4'-carotenal, whereas the aldehyde dehydrogenase ylo-1 mediates the last step by converting beta-apo-4'-carotenal into neurosporaxanthin. The protein is Phytoene desaturase of Neurospora crassa (strain ATCC 24698 / 74-OR23-1A / CBS 708.71 / DSM 1257 / FGSC 987).